Reading from the N-terminus, the 316-residue chain is MVNERKIRLLGPNEIRQLAEELDLNPTKKLGQNFVHDPNTVRKIVKAADVTADDNVVEIGPGLGSLTLALLEAGASVTAVEIDPRLAAKLPATLEEQGAAEADVAVILKDAMEVAVQDFADAGRPLPTALVANLPYNVSVPVLLHMLEEFPSIDRVLVMVQLEVADRLAAAPGSKIYGVPSVKAGFYGSVARAATIGKNVFWPAPKIDSGLVRIDRYAEGAEPWAGGQSGAEQFDADQGIEQLDAQKLRREVFDLADAAFLQRRKTLRAALSGHFGSGQAAEEALRSAGIDPTLRGEKLSTEQFVQLAATSLRSVR.

Asn33, Val35, Gly60, Glu81, Asp110, and Asn133 together coordinate S-adenosyl-L-methionine.

The protein belongs to the class I-like SAM-binding methyltransferase superfamily. rRNA adenine N(6)-methyltransferase family. RsmA subfamily.

It is found in the cytoplasm. The enzyme catalyses adenosine(1518)/adenosine(1519) in 16S rRNA + 4 S-adenosyl-L-methionine = N(6)-dimethyladenosine(1518)/N(6)-dimethyladenosine(1519) in 16S rRNA + 4 S-adenosyl-L-homocysteine + 4 H(+). In terms of biological role, specifically dimethylates two adjacent adenosines (A1518 and A1519) in the loop of a conserved hairpin near the 3'-end of 16S rRNA in the 30S particle. May play a critical role in biogenesis of 30S subunits. The protein is Ribosomal RNA small subunit methyltransferase A of Corynebacterium jeikeium (strain K411).